Consider the following 619-residue polypeptide: Dynein axonemal intermediate chain 2 (619 aa).

WD repeat units follow at residues 214–254 (KPSS…LVAE), 261–302 (SHRD…EPTE), 362–401 (GHHG…SSIM), 405–445 (YHMA…CDPA), and 450–489 (VCDD…STLQ). The interval 566-619 (EALKKKPKPKKASIEVEGEDELEDIAGEEEESGIIMGEDTGEDDMDEKNEGGAP) is disordered. The segment covering 581 to 597 (VEGEDELEDIAGEEEES) has biased composition (acidic residues).

The protein belongs to the dynein intermediate chain family. Consists of at least two heavy chains and a number of intermediate and light chains. Interacts with DNAAF2. Interacts with DNAAF6/PIH1D3. Interacts with HEATR2; probably involved in outer arm dynein assembly. Interacts with CFAP53.

It is found in the cytoplasm. Its subcellular location is the cytoskeleton. The protein resides in the cilium axoneme. It localises to the dynein axonemal particle. Functionally, part of the dynein complex of respiratory cilia. This Rattus norvegicus (Rat) protein is Dynein axonemal intermediate chain 2 (Dnai2).